A 309-amino-acid chain; its full sequence is HPr kinase/phosphorylase (309 aa).

Active-site residues include H138 and K159. 153–160 (GKSGIGKS) is a binding site for ATP. Residue S160 participates in Mg(2+) binding. The Proton acceptor; for phosphorylation activity. Proton donor; for dephosphorylation activity role is filled by D177. Residues 201–210 (IEVRGIGILD) are important for the catalytic mechanism of both phosphorylation and dephosphorylation. E202 is a Mg(2+) binding site. The active site involves R243. The interval 264 to 269 (PIKPAR) is important for the catalytic mechanism of dephosphorylation.

Belongs to the HPrK/P family. Homohexamer. The cofactor is Mg(2+).

The enzyme catalyses [HPr protein]-L-serine + ATP = [HPr protein]-O-phospho-L-serine + ADP + H(+). It carries out the reaction [HPr protein]-O-phospho-L-serine + phosphate + H(+) = [HPr protein]-L-serine + diphosphate. Catalyzes the ATP- as well as the pyrophosphate-dependent phosphorylation of a specific serine residue in HPr, a phosphocarrier protein of the phosphoenolpyruvate-dependent sugar phosphotransferase system (PTS). HprK/P also catalyzes the pyrophosphate-producing, inorganic phosphate-dependent dephosphorylation (phosphorolysis) of seryl-phosphorylated HPr (P-Ser-HPr). The two antagonistic activities of HprK/P are regulated by several intracellular metabolites, which change their concentration in response to the absence or presence of rapidly metabolisable carbon sources (glucose, fructose, etc.) in the growth medium. Therefore, by controlling the phosphorylation state of HPr, HPrK/P is a sensor enzyme that plays a major role in the regulation of carbon metabolism and sugar transport: it mediates carbon catabolite repression (CCR), and regulates PTS-catalyzed carbohydrate uptake and inducer exclusion. The sequence is that of HPr kinase/phosphorylase from Alkaliphilus metalliredigens (strain QYMF).